We begin with the raw amino-acid sequence, 134 residues long: Syncollin (134 aa).

A signal peptide spans 1–21 (MSPLCLLLLALALVAVPGARG).

In terms of assembly, monomer and homooligomer; most probably hexameric. Interacts with GP2. According to PubMed:10753942 interaction with syntaxins shown in PubMed:9244306 is physiologically questionable. Post-translationally, contains intrachain disulfide bonds. As to expression, specifically expressed in pancreas and also detected in secretory granules of parotid gland (at protein level). Expressed in pancreas, spleen, small intestine, lung and neutrophilic granulocytes (at protein level). Expressed by epithelial cells in duodenum and colon.

Its subcellular location is the zymogen granule membrane. It is found in the zymogen granule lumen. In terms of biological role, functions in exocytosis in pancreatic acinar cells regulating the fusion of zymogen granules with each other. May have a pore-forming activity on membranes and regulate exocytosis in other exocrine tissues. This is Syncollin (Sycn) from Rattus norvegicus (Rat).